A 280-amino-acid chain; its full sequence is S-methyl-5'-thioadenosine phosphorylase (280 aa).

Phosphate contacts are provided by residues Ser-18, 60 to 61, and 93 to 94; these read RH and TA. Met-196 provides a ligand contact to substrate. A phosphate-binding site is contributed by Thr-197. 220 to 222 lines the substrate pocket; it reads DYD.

This sequence belongs to the PNP/MTAP phosphorylase family. MTAP subfamily. Homotrimer.

It is found in the cytoplasm. The protein localises to the nucleus. The enzyme catalyses S-methyl-5'-thioadenosine + phosphate = 5-(methylsulfanyl)-alpha-D-ribose 1-phosphate + adenine. It participates in amino-acid biosynthesis; L-methionine biosynthesis via salvage pathway; S-methyl-5-thio-alpha-D-ribose 1-phosphate from S-methyl-5'-thioadenosine (phosphorylase route): step 1/1. Its function is as follows. Catalyzes the reversible phosphorylation of S-methyl-5'-thioadenosine (MTA) to adenine and 5-methylthioribose-1-phosphate. Involved in the breakdown of MTA, a major by-product of polyamine biosynthesis. Responsible for the first step in the methionine salvage pathway after MTA has been generated from S-adenosylmethionine. Has broad substrate specificity with 6-aminopurine nucleosides as preferred substrates. This is S-methyl-5'-thioadenosine phosphorylase from Ciona intestinalis (Transparent sea squirt).